A 1452-amino-acid chain; its full sequence is Receptor-type tyrosine-protein phosphatase mu (1452 aa).

Residues 1 to 20 form the signal peptide; that stretch reads MRTLGTCLVTLAGLLLTAAG. Residues 21 to 742 are Extracellular-facing; that stretch reads ETFSGGCLFD…PEKQTDHTVK (722 aa). An MAM domain is found at 22-184; the sequence is TFSGGCLFDE…VKVLGHPCTR (163 aa). Cys27 and Cys36 form a disulfide bridge. N-linked (GlcNAc...) asparagine glycosylation is found at Asn72, Asn92, Asn131, and Asn249. 2 disulfides stabilise this stretch: Cys96–Cys182 and Cys206–Cys260. One can recognise an Ig-like C2-type domain in the interval 186 to 277; it reads PHFLRIQNVE…VGISNYAELV (92 aa). 4 consecutive Fibronectin type-III domains span residues 284 to 379, 382 to 480, 481 to 587, and 589 to 671; these read PIAP…CADP, GPRK…TDED, LPGA…SAPS, and PAYE…DSLQ. Asn406, Asn414, Asn454, Asn534, Asn544, Asn598, Asn651, and Asn681 each carry an N-linked (GlcNAc...) asparagine glycan. Residues 743 to 764 traverse the membrane as a helical segment; the sequence is IAGVIAGILLFVIIFLGVVLVM. Topologically, residues 765-1452 are cytoplasmic; the sequence is KKRKLAKKRK…EVALEYLNSG (688 aa). Phosphoserine is present on Ser821. Tyrosine-protein phosphatase domains lie at 900–1154 and 1186–1448; these read FKEE…ILEA and IKEE…ALEY. Substrate is bound by residues Asp1063, 1095 to 1101, and Gln1139; that span reads CSAGAGR. Residue Cys1095 is the Phosphocysteine intermediate of the active site. Cys1389 serves as the catalytic Phosphocysteine intermediate.

This sequence belongs to the protein-tyrosine phosphatase family. Receptor class 2B subfamily. Homodimer. As to expression, most abundant in lung, less in brain and heart.

The protein resides in the cell membrane. It carries out the reaction O-phospho-L-tyrosyl-[protein] + H2O = L-tyrosyl-[protein] + phosphate. In terms of biological role, receptor protein-tyrosine phosphatase that mediates homotypic cell-cell interactions and plays a role in adipogenic differentiation via modulation of p120 catenin/CTNND1 phosphorylation. Promotes CTNND1 dephosphorylation and prevents its cytoplasmic localization where it inhibits SLC2A4 membrane trafficking. In turn, SLC2A4 is directed to the plasma membrane and performs its glucose transporter function. This chain is Receptor-type tyrosine-protein phosphatase mu (Ptprm), found in Mus musculus (Mouse).